The sequence spans 135 residues: ATP synthase epsilon chain (135 aa).

It belongs to the ATPase epsilon chain family. In terms of assembly, F-type ATPases have 2 components, CF(1) - the catalytic core - and CF(0) - the membrane proton channel. CF(1) has five subunits: alpha(3), beta(3), gamma(1), delta(1), epsilon(1). CF(0) has three main subunits: a, b and c.

Its subcellular location is the cell inner membrane. Its function is as follows. Produces ATP from ADP in the presence of a proton gradient across the membrane. The chain is ATP synthase epsilon chain from Bradyrhizobium sp. (strain ORS 278).